The chain runs to 440 residues: Ribulose bisphosphate carboxylase large chain (440 aa).

K4 carries the post-translational modification N6,N6,N6-trimethyllysine. 2 residues coordinate substrate: N113 and T163. K165 acts as the Proton acceptor in catalysis. K167 is a substrate binding site. Mg(2+) is bound by residues K191, D193, and E194. K191 is subject to N6-carboxylysine. The active-site Proton acceptor is the H284. The substrate site is built by R285, H317, and S369.

This sequence belongs to the RuBisCO large chain family. Type I subfamily. Heterohexadecamer of 8 large chains and 8 small chains; disulfide-linked. The disulfide link is formed within the large subunit homodimers. Requires Mg(2+) as cofactor. In terms of processing, the disulfide bond which can form in the large chain dimeric partners within the hexadecamer appears to be associated with oxidative stress and protein turnover.

It is found in the plastid. The protein resides in the chloroplast. The catalysed reaction is 2 (2R)-3-phosphoglycerate + 2 H(+) = D-ribulose 1,5-bisphosphate + CO2 + H2O. It carries out the reaction D-ribulose 1,5-bisphosphate + O2 = 2-phosphoglycolate + (2R)-3-phosphoglycerate + 2 H(+). Functionally, ruBisCO catalyzes two reactions: the carboxylation of D-ribulose 1,5-bisphosphate, the primary event in carbon dioxide fixation, as well as the oxidative fragmentation of the pentose substrate in the photorespiration process. Both reactions occur simultaneously and in competition at the same active site. The sequence is that of Ribulose bisphosphate carboxylase large chain from Ptychomitrium gardneri (Gardner's ptychomitrium moss).